We begin with the raw amino-acid sequence, 234 residues long: Ribose-5-phosphate isomerase A (234 aa).

Substrate is bound by residues 34–37 (TGST), 90–93 (DGAD), and 103–106 (KGGG). Glu112 acts as the Proton acceptor in catalysis. Residue Lys130 coordinates substrate.

This sequence belongs to the ribose 5-phosphate isomerase family. As to quaternary structure, homodimer.

It catalyses the reaction aldehydo-D-ribose 5-phosphate = D-ribulose 5-phosphate. The protein operates within carbohydrate degradation; pentose phosphate pathway; D-ribose 5-phosphate from D-ribulose 5-phosphate (non-oxidative stage): step 1/1. In terms of biological role, catalyzes the reversible conversion of ribose-5-phosphate to ribulose 5-phosphate. This chain is Ribose-5-phosphate isomerase A, found in Methanosarcina acetivorans (strain ATCC 35395 / DSM 2834 / JCM 12185 / C2A).